The primary structure comprises 428 residues: MTRSEVLFEQAKKTIPGGVNSPVRAFNGVGGSPLFIEKADGAYIFDADGKKYIDYVGSWGPMILGHNHPKIRQAVLDAVDNGLSFGAPTELEVKMAEKVISMVPSIEQVRMVSSGTEATMSAIRLARGFTNRDNILKFEGCYHGHADCLLVKAGSGALTLGQPSSPGIPEDFAKHTLTATYNDLDSVRAIFEQNPESIACIILEPVAGNMNCIPPVEGFLQGLRTICDEFGALLIIDEVMTGFRVSMSGAQGHYGVTPDLTTLGKVIGGGMPVGAFGGRKDVMQFIAPTGPVYQAGTLSGNPIAMSAGLAQMDALCEPGLYEALADKTKRVAEGFKAAADKHGIPLNITYVGGMFGFFFTEDNTPMTSFAQVTKCNMEHFRHFYHAMLDEGIYLAPSAYEAGFMSMAHGDAEIEYTLAAVDRIFAAMK.

N6-(pyridoxal phosphate)lysine is present on lysine 265.

Belongs to the class-III pyridoxal-phosphate-dependent aminotransferase family. HemL subfamily. Homodimer. Pyridoxal 5'-phosphate is required as a cofactor.

Its subcellular location is the cytoplasm. It catalyses the reaction (S)-4-amino-5-oxopentanoate = 5-aminolevulinate. It participates in porphyrin-containing compound metabolism; protoporphyrin-IX biosynthesis; 5-aminolevulinate from L-glutamyl-tRNA(Glu): step 2/2. In Shewanella frigidimarina (strain NCIMB 400), this protein is Glutamate-1-semialdehyde 2,1-aminomutase.